Reading from the N-terminus, the 145-residue chain is Flagellar assembly factor FliW (145 aa).

This sequence belongs to the FliW family. In terms of assembly, interacts with translational regulator CsrA and flagellin(s).

Its subcellular location is the cytoplasm. Acts as an anti-CsrA protein, binds CsrA and prevents it from repressing translation of its target genes, one of which is flagellin. Binds to flagellin and participates in the assembly of the flagellum. The polypeptide is Flagellar assembly factor FliW (Exiguobacterium sp. (strain ATCC BAA-1283 / AT1b)).